The sequence spans 79 residues: Conotoxin Cal9.2a (79 aa).

The signal sequence occupies residues 1 to 23 (MNCYLILTVALLLTSAMTGTTTA). Residues 24–33 (GQLNKKGVTL) constitute a propeptide that is removed on maturation. 3 cysteine pairs are disulfide-bonded: C41–C58, C46–C68, and C48–C73.

Expressed by the venom duct.

The protein localises to the secreted. Its function is as follows. Probable neurotoxin with unknown target. Possibly targets ion channels. The sequence is that of Conotoxin Cal9.2a from Californiconus californicus (California cone).